A 280-amino-acid chain; its full sequence is Diaminopimelate epimerase (280 aa).

Substrate contacts are provided by Asn-11 and Asn-64. Cys-73 (proton donor) is an active-site residue. Residues 74-75 (GN), Asn-162, Asn-195, and 213-214 (ER) contribute to the substrate site. Catalysis depends on Cys-222, which acts as the Proton acceptor. A substrate-binding site is contributed by 223-224 (GT).

The protein belongs to the diaminopimelate epimerase family. In terms of assembly, homodimer.

The protein resides in the cytoplasm. The catalysed reaction is (2S,6S)-2,6-diaminopimelate = meso-2,6-diaminopimelate. Its pathway is amino-acid biosynthesis; L-lysine biosynthesis via DAP pathway; DL-2,6-diaminopimelate from LL-2,6-diaminopimelate: step 1/1. In terms of biological role, catalyzes the stereoinversion of LL-2,6-diaminopimelate (L,L-DAP) to meso-diaminopimelate (meso-DAP), a precursor of L-lysine and an essential component of the bacterial peptidoglycan. This is Diaminopimelate epimerase from Pelotomaculum thermopropionicum (strain DSM 13744 / JCM 10971 / SI).